Reading from the N-terminus, the 73-residue chain is Omega-conotoxin GVIA (73 aa).

The signal sequence occupies residues 1-22 (MKLTCVVIVAVLLLTACQLITA). The propeptide occupies 23-45 (DDSRGTQKHRALGSTTELSLSTR). Cystine bridges form between Cys-46–Cys-61, Cys-53–Cys-64, and Cys-60–Cys-71. Pro-49, Pro-55, and Pro-66 each carry 4-hydroxyproline. At Tyr-72 the chain carries Tyrosine amide; in form omega-conotoxin GVIA.

It belongs to the conotoxin O1 superfamily. As to expression, expressed by the venom duct.

Its subcellular location is the secreted. In terms of biological role, omega-conotoxins act at presynaptic membranes, they bind and block voltage-gated calcium channels (Cav). This toxin blocks N-type calcium channels (Cav2.2/CACNA1B) with a high potency (it displaces [125I]GVIA with an IC(50)=3.7-38 pM). This is Omega-conotoxin GVIA from Conus geographus (Geography cone).